The primary structure comprises 284 residues: Bifunctional protein FolD (284 aa).

Residues 165–167 (GRS), Ser-190, and Val-231 contribute to the NADP(+) site.

Belongs to the tetrahydrofolate dehydrogenase/cyclohydrolase family. In terms of assembly, homodimer.

The catalysed reaction is (6R)-5,10-methylene-5,6,7,8-tetrahydrofolate + NADP(+) = (6R)-5,10-methenyltetrahydrofolate + NADPH. It catalyses the reaction (6R)-5,10-methenyltetrahydrofolate + H2O = (6R)-10-formyltetrahydrofolate + H(+). It participates in one-carbon metabolism; tetrahydrofolate interconversion. Catalyzes the oxidation of 5,10-methylenetetrahydrofolate to 5,10-methenyltetrahydrofolate and then the hydrolysis of 5,10-methenyltetrahydrofolate to 10-formyltetrahydrofolate. In Natranaerobius thermophilus (strain ATCC BAA-1301 / DSM 18059 / JW/NM-WN-LF), this protein is Bifunctional protein FolD.